The chain runs to 266 residues: Regulatory protein RecX (266 aa).

Belongs to the RecX family.

The protein resides in the cytoplasm. In terms of biological role, modulates RecA activity. The chain is Regulatory protein RecX from Leuconostoc citreum (strain KM20).